We begin with the raw amino-acid sequence, 80 residues long: Defensin-like protein 204 (80 aa).

An N-terminal signal peptide occupies residues 1–29 (MAKTFSSICFTTLLLVVLFISTEIPKSEA). Intrachain disulfides connect cysteine 43–cysteine 64, cysteine 48–cysteine 73, and cysteine 52–cysteine 75.

The protein belongs to the DEFL family.

It localises to the secreted. The sequence is that of Defensin-like protein 204 from Arabidopsis thaliana (Mouse-ear cress).